Reading from the N-terminus, the 503-residue chain is ATP synthase subunit alpha (503 aa).

An ATP-binding site is contributed by 169-176 (GDRKTGKT).

It belongs to the ATPase alpha/beta chains family. As to quaternary structure, F-type ATPases have 2 components, CF(1) - the catalytic core - and CF(0) - the membrane proton channel. CF(1) has five subunits: alpha(3), beta(3), gamma(1), delta(1), epsilon(1). CF(0) has three main subunits: a(1), b(2) and c(9-12). The alpha and beta chains form an alternating ring which encloses part of the gamma chain. CF(1) is attached to CF(0) by a central stalk formed by the gamma and epsilon chains, while a peripheral stalk is formed by the delta and b chains.

The protein resides in the cell membrane. It catalyses the reaction ATP + H2O + 4 H(+)(in) = ADP + phosphate + 5 H(+)(out). Functionally, produces ATP from ADP in the presence of a proton gradient across the membrane. The alpha chain is a regulatory subunit. The protein is ATP synthase subunit alpha of Lactobacillus delbrueckii subsp. bulgaricus (strain ATCC BAA-365 / Lb-18).